A 346-amino-acid polypeptide reads, in one-letter code: Tetraacyldisaccharide 4'-kinase (346 aa).

Residue 53 to 60 (TCGGTGKT) participates in ATP binding.

The protein belongs to the LpxK family.

The enzyme catalyses a lipid A disaccharide + ATP = a lipid IVA + ADP + H(+). It functions in the pathway glycolipid biosynthesis; lipid IV(A) biosynthesis; lipid IV(A) from (3R)-3-hydroxytetradecanoyl-[acyl-carrier-protein] and UDP-N-acetyl-alpha-D-glucosamine: step 6/6. Transfers the gamma-phosphate of ATP to the 4'-position of a tetraacyldisaccharide 1-phosphate intermediate (termed DS-1-P) to form tetraacyldisaccharide 1,4'-bis-phosphate (lipid IVA). The chain is Tetraacyldisaccharide 4'-kinase from Bartonella tribocorum (strain CIP 105476 / IBS 506).